The sequence spans 423 residues: Glucose-1-phosphate adenylyltransferase (423 aa).

Alpha-D-glucose 1-phosphate is bound by residues Tyr112, Gly177, 192–193 (EK), and Ser210.

Belongs to the bacterial/plant glucose-1-phosphate adenylyltransferase family. As to quaternary structure, homotetramer.

It catalyses the reaction alpha-D-glucose 1-phosphate + ATP + H(+) = ADP-alpha-D-glucose + diphosphate. It functions in the pathway glycan biosynthesis; glycogen biosynthesis. Functionally, involved in the biosynthesis of ADP-glucose, a building block required for the elongation reactions to produce glycogen. Catalyzes the reaction between ATP and alpha-D-glucose 1-phosphate (G1P) to produce pyrophosphate and ADP-Glc. In Rhodospirillum rubrum (strain ATCC 11170 / ATH 1.1.1 / DSM 467 / LMG 4362 / NCIMB 8255 / S1), this protein is Glucose-1-phosphate adenylyltransferase.